A 459-amino-acid polypeptide reads, in one-letter code: F-box protein At1g47340 (459 aa).

Residues 31–76 (FMVSVSLPKELILEILKRLPAKSVKRFHCVSKQWASMLSCPHFREL) enclose the F-box domain. The disordered stretch occupies residues 434–459 (AKIEWEEEEEEDEDEDQEKEEEDQWS). Residues 438 to 459 (WEEEEEEDEDEDQEKEEEDQWS) show a composition bias toward acidic residues.

This chain is F-box protein At1g47340, found in Arabidopsis thaliana (Mouse-ear cress).